A 752-amino-acid polypeptide reads, in one-letter code: Granule-bound starch synthase 2, chloroplastic/amyloplastic (752 aa).

The transit peptide at 1 to 57 directs the protein to the chloroplast; sequence MMLSLGSDATVLPFHAKNLKFTPKLSTLNGDLAFSKGLGVGRLNCGSVRLNHKQHVR. 2 disordered regions span residues 116 to 146 and 224 to 253; these read LEGNGVSYESSEKSLSRDSNPQKGSSSSGSA and FENFEGANEPSSKEVANEAENFESGGEKPP. ADP-alpha-D-glucose is bound at residue Lys275.

Belongs to the glycosyltransferase 1 family. Bacterial/plant glycogen synthase subfamily. As to expression, widely expressed.

It localises to the plastid. The protein resides in the chloroplast. It is found in the amyloplast. It catalyses the reaction [(1-&gt;4)-alpha-D-glucosyl](n) + ADP-alpha-D-glucose = [(1-&gt;4)-alpha-D-glucosyl](n+1) + ADP + H(+). It functions in the pathway glycan biosynthesis; starch biosynthesis. In Pisum sativum (Garden pea), this protein is Granule-bound starch synthase 2, chloroplastic/amyloplastic.